A 670-amino-acid polypeptide reads, in one-letter code: MSDETTISLEDGYPPLEALTTMVPPADATGFSQSLLTFAAVMTFLIMIVGICGNLLTVVALLKCPKVRNVAAAFIISLCIADLLFCALVLPFQGLRFVQGTWRHGQVLCRLIPFIQYGNIGVSLLCIAMITINRYVMITHHGLYARIYKRHWIAVMIAACWLFSYGMQLPTLLGEWGRFGYDSRLQTCSIMTDDHGHSSKTTLFITAFVIPCLVIIACYAKIFWVVHKSEQRLKRHATKQNSIPNNLRPLASTGSGALPSGAECQPSNRVSSDSSSSFSIDVPETAPSGKQQPTRVKDQREVRAKRNEWRITKMVLAIFLSFVVCYLPITIVKVADKNVEHPSLHICSYILLYLSACINPIIYVIMNKQYRKAYKTVVFCQPARLLLPFGKTNGASSAAEKWKDTGLSNNHSRTIVSQMSGGTGAASGAGTATGTAAVAVMQTPPEVQQAQALEMVSRGPDLISKSNLPQPNVTPPPPSVLTATPNGSNSNSLTLRLPLKKNNHCYTNSGFNSSTPSPSSGLGIGISSSSIYRPGVGSLGSGSASIRRITMVGDDIILEEEELPPTPPATSAPTTPAPPPPSSPLHPLSTDSSTTTISGGAVVAGSSAPKPATPTPHIYMNVDSPKRNQYYMDRNTNAVAPESDSGPANTSATVSISGSKLTAKMKFPKD.

The Extracellular portion of the chain corresponds to 1-40 (MSDETTISLEDGYPPLEALTTMVPPADATGFSQSLLTFAA). A helical transmembrane segment spans residues 41–61 (VMTFLIMIVGICGNLLTVVAL). Topologically, residues 62–69 (LKCPKVRN) are cytoplasmic. Residues 70–90 (VAAAFIISLCIADLLFCALVL) traverse the membrane as a helical segment. Residues 91 to 111 (PFQGLRFVQGTWRHGQVLCRL) are Extracellular-facing. Cysteine 109 and cysteine 188 are oxidised to a cystine. A helical transmembrane segment spans residues 112 to 132 (IPFIQYGNIGVSLLCIAMITI). Residues 133 to 152 (NRYVMITHHGLYARIYKRHW) lie on the Cytoplasmic side of the membrane. Residues 153–173 (IAVMIAACWLFSYGMQLPTLL) form a helical membrane-spanning segment. At 174–202 (GEWGRFGYDSRLQTCSIMTDDHGHSSKTT) the chain is on the extracellular side. A helical transmembrane segment spans residues 203 to 223 (LFITAFVIPCLVIIACYAKIF). Over 224–313 (WVVHKSEQRL…AKRNEWRITK (90 aa)) the chain is Cytoplasmic. The tract at residues 258 to 302 (LPSGAECQPSNRVSSDSSSSFSIDVPETAPSGKQQPTRVKDQREV) is disordered. Residues 267–279 (SNRVSSDSSSSFS) show a composition bias toward low complexity. A helical membrane pass occupies residues 314–334 (MVLAIFLSFVVCYLPITIVKV). Residues 335–345 (ADKNVEHPSLH) are Extracellular-facing. Residues 346-366 (ICSYILLYLSACINPIIYVIM) form a helical membrane-spanning segment. Residues 367-670 (NKQYRKAYKT…LTAKMKFPKD (304 aa)) lie on the Cytoplasmic side of the membrane. Disordered stretches follow at residues 461–490 (DLIS…GSNS), 562–622 (ELPP…YMNV), and 636–670 (TNAV…FPKD). Over residues 564–584 (PPTPPATSAPTTPAPPPPSSP) the composition is skewed to pro residues. The span at 585–598 (LHPLSTDSSTTTIS) shows a compositional bias: low complexity. Polar residues predominate over residues 646–660 (GPANTSATVSISGSK).

It belongs to the G-protein coupled receptor 1 family. In terms of tissue distribution, isoform A and isoform B are expressed in the head. Isoform B only is expressed in the body. Expressed in embryonic glial cells that are involved in ensheathment and insulation of the nervous system. Both isoforms are expressed in glia that insulate the larval and adult nervous system. Also expressed in the germ cells, the gut, and the heart.

The protein resides in the cell membrane. Isoform A and isoform B are required in glia to regulate the acute sensitivity to cocaine and to continuously maintain the proper blood-brain barrier (BBB) function. A moody-mediated signaling pathway functions in glia to regulate nervous system insulation and drug-related behaviors. Galphai and Galphao, and the regulator of G protein signaling, loco, are required in the surface glia to achieve effective insulation. The components function by regulating the cortical actin and thereby stabilizing the extended morphology of the surface glia, which in turn is necessary for the formation of septate junctions of sufficient length to achieve proper sealing of the nerve cord. This Drosophila melanogaster (Fruit fly) protein is G-protein coupled receptor moody.